The following is a 164-amino-acid chain: Protein-export protein SecB (164 aa).

The protein belongs to the SecB family. Homotetramer, a dimer of dimers. One homotetramer interacts with 1 SecA dimer.

The protein resides in the cytoplasm. Its function is as follows. One of the proteins required for the normal export of preproteins out of the cell cytoplasm. It is a molecular chaperone that binds to a subset of precursor proteins, maintaining them in a translocation-competent state. It also specifically binds to its receptor SecA. The polypeptide is Protein-export protein SecB (Herminiimonas arsenicoxydans).